Consider the following 110-residue polypeptide: Small ribosomal subunit protein bS16 (110 aa).

The tract at residues 87 to 110 (ARNNPEKAVPRKERKAAAEAAAKK) is disordered.

The protein belongs to the bacterial ribosomal protein bS16 family.

This is Small ribosomal subunit protein bS16 from Rhodopseudomonas palustris (strain HaA2).